The primary structure comprises 708 residues: F-box only protein 43 (708 aa).

The segment at Met35–Pro55 is disordered. The residue at position 76 (Ser76) is a Phosphoserine. A Phosphothreonine modification is found at Thr234. The interval Pro320–Glu426 is disordered. Residues Ser327–Asn337 are compositionally biased toward polar residues. At Ser334 the chain carries Phosphoserine. Residues Lys374–Ser385 are compositionally biased toward basic residues. Positions Glu399 to Ala411 are enriched in basic and acidic residues. The 58-residue stretch at Met490–Lys547 folds into the F-box domain. The segment at Ala636–Gly684 adopts a ZBR-type zinc-finger fold. Residues Cys640, Cys643, Cys658, Cys663, Cys668, Cys671, His676, and Cys681 each coordinate Zn(2+). The disordered stretch occupies residues Ser682–Leu708.

Part of a SCF (SKP1-cullin-F-box) protein ligase complex. According to PubMed:34595750 interaction with SKP1 does not occur. Interacts with ANAPC2; the interaction is direct, ANAPC4, CDC16, CDC23; the interaction is direct, ANAPC10; the interaction is direct and CDC26, during spermatogenesis. May interact with CDC20. In terms of processing, phosphorylated on Ser-76, Thr-234 and Ser-334 in response to calcium, which is a prerequisite for ubiquitination and proteasomal degradation. Post-translationally, ubiquitinated in response to calcium, which promotes proteasomal degradation. Expressed in the testis.

It functions in the pathway protein modification; protein ubiquitination. Functionally, required to establish and maintain the arrest of oocytes at the second meiotic metaphase until fertilization. Acts by inhibiting the anaphase-promoting complex/cyclosome (APC/C) ubiquitin ligase. Probably recognizes and binds to some phosphorylated proteins and promotes their ubiquitination and degradation. Plays a vital role in modulating the ubiquitilation of CCNB1 and CDK1 during gametogenesis. The polypeptide is F-box only protein 43 (FBXO43) (Homo sapiens (Human)).